A 409-amino-acid polypeptide reads, in one-letter code: MKEQVIERLIRYAKIDTQSDFTSETTPSTPKQFDLLHVLKDELATIGLTDITLDENGYLFATLEANTDKDVPTIGFLAHVDTTTDFTGTNVNPQRLDNYDGGDIQLNENLVMSPADFPELQNYIGQTLITTDGTTLLGADDKAGIAEIITAMEYLIQNPSIKHGKLRVAFTPDEEIGRGPHKFDVAAFGADYAYTMDGGPLGELQYESFNAAGVKVITKGTSVHPGSAKNKMVNAITMAIAFQNEMPTEAVPEKTEGYEGFIHLMGFKGAIEHAELSYIVRDHDRQKFEEKKQLMQAAAAKIQAQFGEDALSITIEDQYYNMGEKIEPVKEIVDIAREAMEKLDITPITLPIRGGTDGSQLSYMGLPTPNIFAGGENMHGKFEYVSAETMEKATQVIIEIVQLFEQRAK.

Histidine 79 contributes to the Zn(2+) binding site. Aspartate 81 is a catalytic residue. Position 140 (aspartate 140) interacts with Zn(2+). Glutamate 174 (proton acceptor) is an active-site residue. Zn(2+)-binding residues include glutamate 175, aspartate 197, and histidine 379.

This sequence belongs to the peptidase M20B family. Zn(2+) is required as a cofactor.

The protein resides in the cytoplasm. The catalysed reaction is Release of the N-terminal residue from a tripeptide.. In terms of biological role, cleaves the N-terminal amino acid of tripeptides. This chain is Peptidase T, found in Lysinibacillus sphaericus (strain C3-41).